The following is a 329-amino-acid chain: Methionyl-tRNA formyltransferase (329 aa).

112 to 115 (SILP) is a binding site for (6S)-5,6,7,8-tetrahydrofolate.

The protein belongs to the Fmt family.

The enzyme catalyses L-methionyl-tRNA(fMet) + (6R)-10-formyltetrahydrofolate = N-formyl-L-methionyl-tRNA(fMet) + (6S)-5,6,7,8-tetrahydrofolate + H(+). In terms of biological role, attaches a formyl group to the free amino group of methionyl-tRNA(fMet). The formyl group appears to play a dual role in the initiator identity of N-formylmethionyl-tRNA by promoting its recognition by IF2 and preventing the misappropriation of this tRNA by the elongation apparatus. The polypeptide is Methionyl-tRNA formyltransferase (Shewanella sediminis (strain HAW-EB3)).